Here is a 348-residue protein sequence, read N- to C-terminus: 4-hydroxyphenylpyruvate dioxygenase (348 aa).

2 consecutive VOC domains span residues 11 to 141 (GFAF…ITSP) and 151 to 303 (AIDH…IFTE). Residues His154, His232, and Glu312 each contribute to the Fe cation site.

This sequence belongs to the 4HPPD family. The cofactor is Fe cation.

The catalysed reaction is 3-(4-hydroxyphenyl)pyruvate + O2 = homogentisate + CO2. In terms of biological role, catalyzes the transformation of p-hydroxyphenylpyruvate into HGA. Has hemolytic and brown pigment production activity. This Legionella pneumophila subsp. pneumophila (strain Philadelphia 1 / ATCC 33152 / DSM 7513) protein is 4-hydroxyphenylpyruvate dioxygenase (lly).